Reading from the N-terminus, the 323-residue chain is MFKKLITTPFFSPNKQFITFQLESGKRNYFSNNKIQLHGGSGHRQPQVTKVAIEGIKNIIAVSSAKGGVGKSTCAVNIALGLSSHNLSVGLLDVDVFGPSIPLMMDLKNHEKPFTNELNQMIPLQNYGIKCMSMGFLVNEDDPIIWRGPMVGSALEKLLRQTDWGHLDVLVCDLPPGTGDAILTMCQRVPLTGAVIVSTPQDVALADVVRGVNMFKKVEVPILGLVENMSYFNCPHCNESTHIFGNEGAKNTAKKMGINFLGDVPIHLQIRETSDSGKPITVTQPDSPQAKNYKDISKEIIKQLEIINNDENKDNKEPNIIIT.

65-72 (AKGGVGKS) provides a ligand contact to ATP.

It belongs to the Mrp/NBP35 ATP-binding proteins family. It depends on [4Fe-4S] cluster as a cofactor.

The protein resides in the mitochondrion. Iron-sulfur cluster transfer protein involved in the assembly of the mitochondrial membrane respiratory chain NADH dehydrogenase (Complex I). May deliver one or more Fe-S clusters to complex I subunits. In Dictyostelium discoideum (Social amoeba), this protein is Iron-sulfur cluster transfer protein NUBPL (nubpl).